A 199-amino-acid polypeptide reads, in one-letter code: Peptidyl-prolyl cis-trans isomerase CYP22 (199 aa).

In terms of domain architecture, PPIase cyclophilin-type spans 35 to 198; it reads FFDVSIGGIP…LAVVITECGE (164 aa).

The protein belongs to the cyclophilin-type PPIase family. Ubiquitous.

The enzyme catalyses [protein]-peptidylproline (omega=180) = [protein]-peptidylproline (omega=0). PPIases accelerate the folding of proteins. It catalyzes the cis-trans isomerization of proline imidic peptide bonds in oligopeptides. In Arabidopsis thaliana (Mouse-ear cress), this protein is Peptidyl-prolyl cis-trans isomerase CYP22 (CYP22).